Here is a 399-residue protein sequence, read N- to C-terminus: Acetate kinase (399 aa).

Residue Asn8 participates in Mg(2+) binding. Position 15 (Lys15) interacts with ATP. Arg89 provides a ligand contact to substrate. Asp146 acts as the Proton donor/acceptor in catalysis. Residues 206 to 210, 283 to 285, and 331 to 335 contribute to the ATP site; these read HVGNG, DMR, and GMGEN. Glu383 is a binding site for Mg(2+).

Belongs to the acetokinase family. In terms of assembly, homodimer. Mg(2+) serves as cofactor. It depends on Mn(2+) as a cofactor.

Its subcellular location is the cytoplasm. The enzyme catalyses acetate + ATP = acetyl phosphate + ADP. The protein operates within metabolic intermediate biosynthesis; acetyl-CoA biosynthesis; acetyl-CoA from acetate: step 1/2. In terms of biological role, catalyzes the formation of acetyl phosphate from acetate and ATP. Can also catalyze the reverse reaction. The sequence is that of Acetate kinase from Streptococcus equi subsp. zooepidemicus (strain H70).